A 510-amino-acid polypeptide reads, in one-letter code: MRALLSVSDKEGIVEFGKELENLGFEILSTGGTFKLLKENGVKVIEVSDFTKSPELFEGRVKTLHPKIHGGILHKRNDENHIKQAKENEILGIDLVCVNLYPFKKTTIMSDDFDEIIENIDIGGPAMIRSAAKNYKDVMVLCDRLDYEKVIETLKKNQNDENFRLSLMIKAYEYTANYDAYIANYMNERFNGGFGASKFIVGQKVFDTKYGENPHQKGALYEFDAFFSANFKALKGEASFNNLTDINAALNLASSFDKAPAIAIVKHGNSCGFAIKENLVQSYIHALKSDSVSAYGGVVAINGTLDEALANKINEIYVEVIIAANVDEKALAVFEGKKRIKIFTQESPFLIRSFDKYDFKHIDGGFVYQNSDEADEDELKNAKLMSQREASKEELKDLEIAMKIAAFTKSNNVVYVKNGAMVAIGMGMTSRIDAAKAATFKAKEMGLDLQGCVLASEAFFPFRDSIDEASKVGVKAIVEPGGSIRDDEVVKAADEYGMALYFTGVRHFLH.

In terms of domain architecture, MGS-like spans 1-142 (MRALLSVSDK…KNYKDVMVLC (142 aa)).

This sequence belongs to the PurH family.

It catalyses the reaction (6R)-10-formyltetrahydrofolate + 5-amino-1-(5-phospho-beta-D-ribosyl)imidazole-4-carboxamide = 5-formamido-1-(5-phospho-D-ribosyl)imidazole-4-carboxamide + (6S)-5,6,7,8-tetrahydrofolate. The enzyme catalyses IMP + H2O = 5-formamido-1-(5-phospho-D-ribosyl)imidazole-4-carboxamide. Its pathway is purine metabolism; IMP biosynthesis via de novo pathway; 5-formamido-1-(5-phospho-D-ribosyl)imidazole-4-carboxamide from 5-amino-1-(5-phospho-D-ribosyl)imidazole-4-carboxamide (10-formyl THF route): step 1/1. It functions in the pathway purine metabolism; IMP biosynthesis via de novo pathway; IMP from 5-formamido-1-(5-phospho-D-ribosyl)imidazole-4-carboxamide: step 1/1. The protein is Bifunctional purine biosynthesis protein PurH of Campylobacter jejuni subsp. doylei (strain ATCC BAA-1458 / RM4099 / 269.97).